A 327-amino-acid polypeptide reads, in one-letter code: Spermidine/putrescine import ATP-binding protein PotA (327 aa).

The region spanning 5-235 (IKVEAVEKHF…PKTLFVATFI (231 aa)) is the ABC transporter domain. 37 to 44 (GPSGCGKT) contacts ATP.

It belongs to the ABC transporter superfamily. Spermidine/putrescine importer (TC 3.A.1.11.1) family. The complex is composed of two ATP-binding proteins (PotA), two transmembrane proteins (PotB and PotC) and a solute-binding protein (PotD).

Its subcellular location is the cell membrane. The catalysed reaction is ATP + H2O + polyamine-[polyamine-binding protein]Side 1 = ADP + phosphate + polyamineSide 2 + [polyamine-binding protein]Side 1.. Functionally, part of the ABC transporter complex PotABCD involved in spermidine/putrescine import. Responsible for energy coupling to the transport system. This is Spermidine/putrescine import ATP-binding protein PotA from Bacillus cereus (strain ATCC 14579 / DSM 31 / CCUG 7414 / JCM 2152 / NBRC 15305 / NCIMB 9373 / NCTC 2599 / NRRL B-3711).